Here is an 876-residue protein sequence, read N- to C-terminus: AP-1 complex subunit gamma-1 (876 aa).

9 HEAT repeats span residues 97 to 135 (DERQ…ICSA), 136 to 173 (EMAR…KVPD), 248 to 284 (FLHI…KTES), 308 to 345 (SLRV…FDDQ), 346 to 382 (AVQR…ENNV), 384 to 417 (QLTK…KFSP), 418 to 454 (EKLW…NASE), 506 to 545 (VTES…RFPS), and 560 to 599 (SLLL…ATFN). The region spanning 756–873 (PAYAPIVAYE…LEEGQVSNFP (118 aa)) is the GAE domain.

This sequence belongs to the adaptor complexes large subunit family. As to quaternary structure, adaptor protein complex 1 (AP-1) is a heterotetramer composed of two large adaptins (gamma-type subunit and beta-type subunit), a medium adaptin (mu-type subunit) and a small adaptin (sigma-type subunit). Binds to EPSIN1. Interacts with DRP2A/ADL6 (via C-terminus).

Its subcellular location is the golgi apparatus. The protein localises to the cytoplasmic vesicle. It localises to the clathrin-coated vesicle membrane. In terms of biological role, subunit of clathrin-associated adaptor protein complex 1 that plays a role in protein sorting at the trans-Golgi network and early endosomes (TGN/EE). The AP complexes mediate both the recruitment of clathrin to membranes and the recognition of sorting signals within the cytosolic tails of transmembrane cargo molecules. This Arabidopsis thaliana (Mouse-ear cress) protein is AP-1 complex subunit gamma-1 (GAMMA-ADR).